The primary structure comprises 255 residues: uncharacterized protein (255 aa).

An N-terminal signal peptide occupies residues 1–28 (MFKLNFKNNYKVLTLLFSLTLSMFVSNA). N38, N61, and N83 each carry an N-linked (GlcNAc...) asparagine glycan.

It is found in the secreted. This is an uncharacterized protein from Dictyostelium discoideum (Social amoeba).